The following is a 164-amino-acid chain: Disulfide bond formation protein B (164 aa).

At methionine 1–cysteine 9 the chain is on the cytoplasmic side. The helical transmembrane segment at phenylalanine 10 to tyrosine 26 threads the bilayer. Residues phenylalanine 27–isoleucine 44 lie on the Periplasmic side of the membrane. Cysteines 36 and 39 form a disulfide. A helical membrane pass occupies residues methionine 45–proline 61. At alanine 62–alanine 68 the chain is on the cytoplasmic side. A helical transmembrane segment spans residues tyrosine 69–glycine 85. Residues arginine 86–alanine 142 are Periplasmic-facing. Cysteines 101 and 128 form a disulfide. The helical transmembrane segment at tryptophan 143 to asparagine 161 threads the bilayer. The Cytoplasmic segment spans residues alanine 162–arginine 164.

The protein belongs to the DsbB family.

Its subcellular location is the cell inner membrane. Functionally, required for disulfide bond formation in some periplasmic proteins. Acts by oxidizing the DsbA protein. The polypeptide is Disulfide bond formation protein B (Methylococcus capsulatus (strain ATCC 33009 / NCIMB 11132 / Bath)).